A 67-amino-acid chain; its full sequence is Large ribosomal subunit protein bL35 (67 aa).

The protein belongs to the bacterial ribosomal protein bL35 family.

The chain is Large ribosomal subunit protein bL35 from Acidovorax ebreus (strain TPSY) (Diaphorobacter sp. (strain TPSY)).